A 66-amino-acid polypeptide reads, in one-letter code: Large ribosomal subunit protein uL29 (66 aa).

It belongs to the universal ribosomal protein uL29 family.

The chain is Large ribosomal subunit protein uL29 from Methylibium petroleiphilum (strain ATCC BAA-1232 / LMG 22953 / PM1).